The following is a 334-amino-acid chain: MTIIVTGAAGFIGSNIVKALNQRGITDIVAVDNLTKGEKFKNLAECEIAHYLDKHEFIRQVREHILPYQNIEAVFHQGACSDTMNHDGLYMMENNYQYTLDLLDWCQDERIPFLYASSAAVYGKGEIFREERELEKPLNVYGYSKFLFDQVLRRRMKEGLTAQVVGFRYFNVYGQHEQHKGRMASVAFHHFHQYREHGYVNLFGSNDGYGNGEQTRDFVSVEDVAKINLYFFDHPELSGIYNLGTGRSQQFNELAAAAVNACRAAEGKSELSLKELVEEELIRYIPFPDALKGKYQGFTQADITKLREAGYKEEFFDVKAGVNRYVKWMLENLA.

NADP(+) contacts are provided by residues 11–12 (FI), 32–33 (DN), lysine 39, lysine 54, 77–81 (QGACS), and asparagine 94. Tyrosine 141 (proton acceptor) is an active-site residue. Position 145 (lysine 145) interacts with NADP(+). Asparagine 171 contacts substrate. NADP(+)-binding residues include valine 172 and lysine 180. The active-site Proton acceptor is the lysine 180. Residues arginine 182, histidine 189, 203–206 (FGSN), arginine 216, and tyrosine 295 contribute to the substrate site.

It belongs to the NAD(P)-dependent epimerase/dehydratase family. HldD subfamily. As to quaternary structure, homopentamer. NADP(+) serves as cofactor.

The enzyme catalyses ADP-D-glycero-beta-D-manno-heptose = ADP-L-glycero-beta-D-manno-heptose. It participates in nucleotide-sugar biosynthesis; ADP-L-glycero-beta-D-manno-heptose biosynthesis; ADP-L-glycero-beta-D-manno-heptose from D-glycero-beta-D-manno-heptose 7-phosphate: step 4/4. In terms of biological role, catalyzes the interconversion between ADP-D-glycero-beta-D-manno-heptose and ADP-L-glycero-beta-D-manno-heptose via an epimerization at carbon 6 of the heptose. The polypeptide is ADP-L-glycero-D-manno-heptose-6-epimerase (Neisseria gonorrhoeae (strain ATCC 700825 / FA 1090)).